Reading from the N-terminus, the 294-residue chain is Arsenical-resistance protein ARR1 (294 aa).

The span at 1–11 shows a compositional bias: basic residues; that stretch reads MAKPRGRKGGR. Residues 1 to 29 form a disordered region; sequence MAKPRGRKGGRKPSLTPPKNKRAAQLRAS. The segment at 22-45 is basic motif; that stretch reads RAAQLRASQNAFRKRKLERLEELE. The region spanning 22–72 is the bZIP domain; sequence RAAQLRASQNAFRKRKLERLEELEKKEAQLTVTNDQIHILKKENELLHFML. A leucine-zipper region spans residues 44-72; the sequence is LEKKEAQLTVTNDQIHILKKENELLHFML. 3 residues coordinate arsenite: Cys132, Cys137, and Cys274.

The protein belongs to the bZIP family. YAP subfamily. As to quaternary structure, homodimer. Phosphorylation by HOG1 promotes nuclear localization in the presence of arsenic.

It is found in the cytoplasm. Its subcellular location is the nucleus. Transcriptional activity is controlled by regulated degradation by the ubiquitin-proteasome pathway in absence of arsenic. Arsenic-exposure results in stabilization and increased transcriptional activity. Transcription activator required for resistance to arsenic compounds and for a regulated expression of ACR2, ACR3 and YCF1. In Saccharomyces cerevisiae (strain ATCC 204508 / S288c) (Baker's yeast), this protein is Arsenical-resistance protein ARR1.